A 150-amino-acid chain; its full sequence is 3-dehydroquinate dehydratase (150 aa).

Tyr26 functions as the Proton acceptor in the catalytic mechanism. Substrate is bound by residues Asn77, His83, and Asp90. His103 acts as the Proton donor in catalysis. Residues 104–105 (LS) and Arg114 contribute to the substrate site.

It belongs to the type-II 3-dehydroquinase family. Homododecamer.

It carries out the reaction 3-dehydroquinate = 3-dehydroshikimate + H2O. It functions in the pathway metabolic intermediate biosynthesis; chorismate biosynthesis; chorismate from D-erythrose 4-phosphate and phosphoenolpyruvate: step 3/7. Its function is as follows. Catalyzes a trans-dehydration via an enolate intermediate. The sequence is that of 3-dehydroquinate dehydratase from Histophilus somni (strain 129Pt) (Haemophilus somnus).